We begin with the raw amino-acid sequence, 478 residues long: Early growth response protein 4 (478 aa).

Positions threonine 275–proline 302 are disordered. Positions glycine 286–glycine 296 are enriched in gly residues. C2H2-type zinc fingers lie at residues phenylalanine 372 to histidine 396, phenylalanine 402 to histidine 424, and phenylalanine 430 to histidine 452.

This sequence belongs to the EGR C2H2-type zinc-finger protein family.

The protein localises to the nucleus. In terms of biological role, transcriptional regulator. Recognizes and binds to the DNA sequence 5'-GCGGGGGCG-3' (GSG). Activates the transcription of target genes whose products are required for mitogenesis and differentiation. The protein is Early growth response protein 4 (Egr4) of Mus musculus (Mouse).